Consider the following 213-residue polypeptide: Holliday junction branch migration complex subunit RuvA (213 aa).

The segment at 1–64 (MIASVTGEVA…DEAPLLFGFA (64 aa)) is domain I. Residues 65–143 (QGDEKEIFTV…LPEPPVQQAN (79 aa)) form a domain II region. The segment at 144–152 (QPQVPVWRD) is flexible linker. Positions 152–213 (DQVVDALTGL…GTTHAPTGRR (62 aa)) are domain III.

The protein belongs to the RuvA family. As to quaternary structure, homotetramer. Forms an RuvA(8)-RuvB(12)-Holliday junction (HJ) complex. HJ DNA is sandwiched between 2 RuvA tetramers; dsDNA enters through RuvA and exits via RuvB. An RuvB hexamer assembles on each DNA strand where it exits the tetramer. Each RuvB hexamer is contacted by two RuvA subunits (via domain III) on 2 adjacent RuvB subunits; this complex drives branch migration. In the full resolvosome a probable DNA-RuvA(4)-RuvB(12)-RuvC(2) complex forms which resolves the HJ.

The protein resides in the cytoplasm. Its function is as follows. The RuvA-RuvB-RuvC complex processes Holliday junction (HJ) DNA during genetic recombination and DNA repair, while the RuvA-RuvB complex plays an important role in the rescue of blocked DNA replication forks via replication fork reversal (RFR). RuvA specifically binds to HJ cruciform DNA, conferring on it an open structure. The RuvB hexamer acts as an ATP-dependent pump, pulling dsDNA into and through the RuvAB complex. HJ branch migration allows RuvC to scan DNA until it finds its consensus sequence, where it cleaves and resolves the cruciform DNA. This Kocuria rhizophila (strain ATCC 9341 / DSM 348 / NBRC 103217 / DC2201) protein is Holliday junction branch migration complex subunit RuvA.